Here is a 266-residue protein sequence, read N- to C-terminus: Undecaprenyl-diphosphatase (266 aa).

The next 8 helical transmembrane spans lie at Met1–Leu21, Ala43–Trp63, Leu81–Phe101, Thr107–Ile127, Leu145–Phe165, His183–Tyr203, Leu219–Ile239, and Ile245–Ile265.

It belongs to the UppP family.

It localises to the cell membrane. The catalysed reaction is di-trans,octa-cis-undecaprenyl diphosphate + H2O = di-trans,octa-cis-undecaprenyl phosphate + phosphate + H(+). Catalyzes the dephosphorylation of undecaprenyl diphosphate (UPP). Confers resistance to bacitracin. This is Undecaprenyl-diphosphatase from Lawsonia intracellularis (strain PHE/MN1-00).